Here is a 201-residue protein sequence, read N- to C-terminus: Extracellular superoxide dismutase [Cu-Zn] (201 aa).

The first 42 residues, 1–42 (MINSFIVIFLSFLIFINYANLVCVEATHVYGRRSHSNGMHGN), serve as a signal peptide directing secretion. Positions 89, 91, and 106 each coordinate Cu cation. A disulfide bridge connects residues cysteine 100 and cysteine 192. Residues histidine 106, histidine 114, histidine 123, and aspartate 126 each contribute to the Zn(2+) site. Histidine 163 lines the Cu cation pocket.

Belongs to the Cu-Zn superoxide dismutase family. Homodimer. Requires Cu cation as cofactor. The cofactor is Zn(2+).

It is found in the secreted. The protein localises to the extracellular space. The catalysed reaction is 2 superoxide + 2 H(+) = H2O2 + O2. Destroys radicals which are normally produced within the cells and which are toxic to biological systems. May act in the parasite defense against phagocyte-generated reactive oxygen species. The polypeptide is Extracellular superoxide dismutase [Cu-Zn] (sod-4) (Onchocerca volvulus).